We begin with the raw amino-acid sequence, 62 residues long: Conotoxin reg3.7 (62 aa).

The N-terminal stretch at 1–15 (RVLLTICLLLFPLSA) is a signal peptide. A propeptide spanning residues 16 to 45 (LPLDGDQPADQPARHMQSAERNPRFDPVKR) is cleaved from the precursor. Positions 17 to 37 (PLDGDQPADQPARHMQSAERN) are disordered. 3 cysteine pairs are disulfide-bonded: cysteine 46/cysteine 60, cysteine 47/cysteine 58, and cysteine 52/cysteine 61. A Cysteine amide modification is found at cysteine 61.

This sequence belongs to the conotoxin M superfamily. As to expression, expressed by the venom duct.

It is found in the secreted. The protein is Conotoxin reg3.7 of Conus regius (Crown cone).